Consider the following 757-residue polypeptide: Xaa-Pro dipeptidyl-peptidase (757 aa).

Catalysis depends on charge relay system residues S348, D468, and H498.

This sequence belongs to the peptidase S15 family. Homodimer.

It is found in the cytoplasm. The enzyme catalyses Hydrolyzes Xaa-Pro-|- bonds to release unblocked, N-terminal dipeptides from substrates including Ala-Pro-|-p-nitroanilide and (sequentially) Tyr-Pro-|-Phe-Pro-|-Gly-Pro-|-Ile.. In terms of biological role, removes N-terminal dipeptides sequentially from polypeptides having unsubstituted N-termini provided that the penultimate residue is proline. In Streptococcus pneumoniae serotype 19F (strain G54), this protein is Xaa-Pro dipeptidyl-peptidase.